The chain runs to 84 residues: Gas vesicle protein M1 (84 aa).

The interacts with GvpL1 stretch occupies residues Met-1 to Ile-25. Positions Lys-5 to Asp-21 are alpha helix 1. Beta-strand regions lie at residues Ala-27–Val-29 and Ile-41–Leu-43. The Conserved in GvpJ1/2 but not GvpA signature appears at Arg-44–Ala-48. Alpha helix stretches follow at residues Ala-46–Tyr-56 and Trp-62–Asp-84.

The protein belongs to the gas vesicle GvpA family. As to quaternary structure, gvpF to GvpM interact with each other in vitro, and may form multi-subunit complex(es). Might interact with GvpA1.

It is found in the gas vesicle. Its function is as follows. Proteins GvpF to GvpM might be involved in nucleating gas vesicle formation. A minor component of the gas vesicle. Gas vesicles are hollow, gas filled proteinaceous nanostructures found in several microbial planktonic microorganisms. They allow positioning of halobacteria at the optimal depth for growth in the poorly aerated, shallow brine pools of their habitat. In terms of biological role, expression of a 9.5 kb p-vac DNA fragment containing 2 divergently transcribed regions (gvpD-gvpE-gvpF-gvpG-gvpH-gvpI-gvpJ-gvpK-gvpL-gvpM and gvpA-gvpC-gvpN-gvpO) allows H.volcanii to produce gas vesicles. All site-directed mutagenesis is tested in H.volcanii. A minimal gas vesicle can be made in H.volcanii by gvpA1-gvpO1 plus gvpF1-gvpG1-gvpJ1-gvpK1-gvpL1-gvpM1; lack of enough GvpJ1 prevents formation. A similar region restores gas vesicle production in H.halobium without the p-vac locus, but it still has the c-vac locus. This chain is Gas vesicle protein M1 (gvpM11), found in Halobacterium salinarum (strain ATCC 700922 / JCM 11081 / NRC-1) (Halobacterium halobium).